The following is a 193-amino-acid chain: Homeobox protein HD-12 (193 aa).

The segment at residues 123–185 (SVIRRINFPK…NARRRILPFM (63 aa)) is a DNA-binding region (homeobox; TALE-type).

This sequence belongs to the TALE/KNOX homeobox family.

It is found in the nucleus. This chain is Homeobox protein HD-12 (HD-12), found in Encephalitozoon cuniculi (strain GB-M1) (Microsporidian parasite).